Here is a 1295-residue protein sequence, read N- to C-terminus: DNA-directed RNA polymerase subunit beta' (1295 aa).

Zn(2+) contacts are provided by Cys60, Cys62, Cys75, and Cys78. Positions 516, 518, and 520 each coordinate Mg(2+). The Zn(2+) site is built by Cys841, Cys914, Cys921, and Cys924.

Belongs to the RNA polymerase beta' chain family. As to quaternary structure, the RNAP catalytic core consists of 2 alpha, 1 beta, 1 beta' and 1 omega subunit. When a sigma factor is associated with the core the holoenzyme is formed, which can initiate transcription. Mg(2+) is required as a cofactor. It depends on Zn(2+) as a cofactor.

The catalysed reaction is RNA(n) + a ribonucleoside 5'-triphosphate = RNA(n+1) + diphosphate. In terms of biological role, DNA-dependent RNA polymerase catalyzes the transcription of DNA into RNA using the four ribonucleoside triphosphates as substrates. The sequence is that of DNA-directed RNA polymerase subunit beta' from Dehalococcoides mccartyi (strain ATCC BAA-2100 / JCM 16839 / KCTC 5957 / BAV1).